We begin with the raw amino-acid sequence, 110 residues long: Large ribosomal subunit protein uL22 (110 aa).

It belongs to the universal ribosomal protein uL22 family. In terms of assembly, part of the 50S ribosomal subunit.

Functionally, this protein binds specifically to 23S rRNA; its binding is stimulated by other ribosomal proteins, e.g. L4, L17, and L20. It is important during the early stages of 50S assembly. It makes multiple contacts with different domains of the 23S rRNA in the assembled 50S subunit and ribosome. Its function is as follows. The globular domain of the protein is located near the polypeptide exit tunnel on the outside of the subunit, while an extended beta-hairpin is found that lines the wall of the exit tunnel in the center of the 70S ribosome. The chain is Large ribosomal subunit protein uL22 from Shewanella loihica (strain ATCC BAA-1088 / PV-4).